A 1347-amino-acid polypeptide reads, in one-letter code: Spermatogenesis-associated protein 31A1 (1347 aa).

The chain crosses the membrane as a helical span at residues 23-43 (PWVLDIFLTLVFALGFFFLLL). Disordered stretches follow at residues 55–89 (PSPS…ECPR), 106–235 (GPHL…STLI), 373–397 (EQDT…GPQK), 628–658 (DESP…EAQK), 899–955 (PRGI…REAV), and 1085–1160 (HEEP…PPSV). Positions 60 to 82 (GKRKCPVGRRRRPRGRMKNHSLR) are enriched in basic residues. Over residues 165–178 (LASTPSPGPMTTSV) the composition is skewed to polar residues. Residues 198–222 (PEPPALFPHPPHTPDPLACSPPPPK) are compositionally biased toward pro residues. Composition is skewed to polar residues over residues 631–651 (PGTS…STGE) and 927–948 (LTYS…SSKA). 2 stretches are compositionally biased toward basic and acidic residues: residues 1108-1127 (HKSE…RLEG) and 1137-1146 (RKTEDTHQDE).

The protein belongs to the SPATA31 family.

It is found in the membrane. Its function is as follows. May play a role in spermatogenesis. The polypeptide is Spermatogenesis-associated protein 31A1 (Homo sapiens (Human)).